A 520-amino-acid chain; its full sequence is MRIFRFTSISPRILPSNHYSTFPLKQNVSSLSPAKYIAGALQEHINSPAPKAGKKIHADIIKTGFQPDLNISIKLLILHLKCGCLSYARQVFDELPKPTLSAYNYMISGYLKHGLVKELLLLVQRMSYSGEKADGYTLSMVLKASNSRGSTMILPRSLCRLVHARIIKCDVELDDVLITALVDTYVKSGKLESARTVFETMKDENVVCCTSMISGYMNQGFVEDAEEIFNTTKVKDIVVYNAMVEGFSRSGETAKRSVDMYISMQRAGFHPNISTFASVIGACSVLTSHEVGQQVHAQIMKSGVYTHIKMGSSLLDMYAKCGGINDARRVFDQMQEKNVFSWTSMIDGYGKNGNPEEALELFTRMKEFRIEPNYVTFLGALSACSHSGLVDKGYEIFESMQRDYSMKPKMEHYACIVDLMGRAGDLNKAFEFARAMPERPDSDIWAALLSSCNLHGNVELASIAASELFKLNADKRPGAYLALSNVYASNDKWDNVSKIREVMKRRRISKTIGRSWTSED.

A mitochondrion-targeting transit peptide spans methionine 1 to tyrosine 19. PPR repeat units follow at residues aspartate 68–proline 98, threonine 99–alanine 133, aspartate 134–lysine 168, aspartate 174–cysteine 208, cysteine 209–lysine 235, aspartate 236–proline 271, asparagine 272–threonine 306, histidine 307–lysine 337, asparagine 338–proline 372, asparagine 373–aspartate 403, and lysine 409–arginine 439. The tract at residues isoleucine 444–aspartate 520 is type E motif.

The protein belongs to the PPR family. PCMP-E subfamily.

The protein resides in the mitochondrion. The chain is Pentatricopeptide repeat-containing protein At1g28690, mitochondrial (PCMP-E34) from Arabidopsis thaliana (Mouse-ear cress).